Reading from the N-terminus, the 434-residue chain is Methylenetetrahydrofolate--tRNA-(uracil-5-)-methyltransferase TrmFO (434 aa).

Residue 10 to 15 (GAGLAG) participates in FAD binding.

The protein belongs to the MnmG family. TrmFO subfamily. Requires FAD as cofactor.

Its subcellular location is the cytoplasm. The catalysed reaction is uridine(54) in tRNA + (6R)-5,10-methylene-5,6,7,8-tetrahydrofolate + NADH + H(+) = 5-methyluridine(54) in tRNA + (6S)-5,6,7,8-tetrahydrofolate + NAD(+). It carries out the reaction uridine(54) in tRNA + (6R)-5,10-methylene-5,6,7,8-tetrahydrofolate + NADPH + H(+) = 5-methyluridine(54) in tRNA + (6S)-5,6,7,8-tetrahydrofolate + NADP(+). In terms of biological role, catalyzes the folate-dependent formation of 5-methyl-uridine at position 54 (M-5-U54) in all tRNAs. The polypeptide is Methylenetetrahydrofolate--tRNA-(uracil-5-)-methyltransferase TrmFO (Bacillus mycoides (strain KBAB4) (Bacillus weihenstephanensis)).